Here is a 555-residue protein sequence, read N- to C-terminus: La-related protein 7 (555 aa).

Residues 36-127 (RSRVKQLLSD…RRKEPLGETP (92 aa)) form the HTH La-type RNA-binding domain. Residues 133–211 (RTVYVELLPK…PRKPGIFPKT (79 aa)) enclose the RRM domain. Residues 218-327 (PFDAVTQDND…ENKDEELNSL (110 aa)) are disordered. Polar residues-rich tracts occupy residues 238–251 (KNST…NNMD), 258–274 (STVT…STVS), and 284–293 (SQSFEASSGE). Positions 295–356 (QFEMSSKMRK…ERLKVGEEVI (62 aa)) form a coiled coil. Over residues 303–327 (RKVEEEKSELKDLSSENKDEELNSL) the composition is skewed to basic and acidic residues. The 114-residue stretch at 425–538 (EFLSGVIVKI…TEKLISKAEK (114 aa)) folds into the xRRM domain.

The protein belongs to the LARP7 family. In terms of assembly, core component of the 7SK RNP complex. Associates with box C/D small nucleolar ribonucleoprotein (snoRNP) complexes.

It localises to the nucleus. The protein resides in the nucleoplasm. In terms of biological role, RNA-binding protein that specifically binds distinct small nuclear RNA (snRNAs) and regulates their processing and function. Specifically binds the 7SK snRNA (7SK RNA) and acts as a core component of the 7SK ribonucleoprotein (RNP) complex, thereby acting as a negative regulator of transcription elongation by RNA polymerase II. The 7SK RNP complex sequesters the positive transcription elongation factor b (P-TEFb) in a large inactive 7SK RNP complex preventing RNA polymerase II phosphorylation and subsequent transcriptional elongation. The 7SK RNP complex also promotes snRNA gene transcription by RNA polymerase II via interaction with the little elongation complex (LEC). LARP7 specifically binds to the highly conserved 3'-terminal U-rich stretch of 7SK RNA; on stimulation, remains associated with 7SK RNA, whereas P-TEFb is released from the complex. LARP7 also acts as a regulator of mRNA splicing fidelity by promoting U6 snRNA processing. Specifically binds U6 snRNAs and associates with a subset of box C/D RNP complexes: promotes U6 snRNA 2'-O-methylation by facilitating U6 snRNA loading into box C/D RNP complexes. U6 snRNA 2'-O-methylation is required for mRNA splicing fidelity. The chain is La-related protein 7 from Danio rerio (Zebrafish).